Here is a 322-residue protein sequence, read N- to C-terminus: Adenine deaminase (322 aa).

3 residues coordinate Zn(2+): His11, His13, and His189. Glu192 acts as the Proton donor in catalysis. Residue Asp270 coordinates Zn(2+). Asp271 serves as a coordination point for substrate.

This sequence belongs to the metallo-dependent hydrolases superfamily. Adenosine and AMP deaminases family. Adenine deaminase type 2 subfamily. Zn(2+) serves as cofactor.

The catalysed reaction is adenine + H2O + H(+) = hypoxanthine + NH4(+). In terms of biological role, catalyzes the hydrolytic deamination of adenine to hypoxanthine. Plays an important role in the purine salvage pathway and in nitrogen catabolism. The polypeptide is Adenine deaminase (Rhizobium leguminosarum bv. trifolii (strain WSM2304)).